The chain runs to 285 residues: Small ribosomal subunit protein mS23 (285 aa).

Belongs to the mitochondrion-specific ribosomal protein mS23 family. Component of the mitochondrial small ribosomal subunit.

It is found in the mitochondrion. The chain is Small ribosomal subunit protein mS23 (RSM25) from Debaryomyces hansenii (strain ATCC 36239 / CBS 767 / BCRC 21394 / JCM 1990 / NBRC 0083 / IGC 2968) (Yeast).